Reading from the N-terminus, the 271-residue chain is Beta-lysine N(6)-acetyltransferase (271 aa).

Positions 86–122 are disordered; that stretch reads LRKDRGTGKNQKKKKISRKKDNWKKRKEKSRLPEGYT. Basic residues predominate over residues 95-114; it reads NQKKKKISRKKDNWKKRKEK. The 149-residue stretch at 121–269 folds into the N-acetyltransferase domain; sequence YTLRPAVQAD…GFEDMNIWCR (149 aa).

The protein belongs to the acetyltransferase family.

The catalysed reaction is (3S)-3,6-diaminohexanoate + acetyl-CoA = (3S)-6-acetamido-3-aminohexanoate + CoA + H(+). In terms of biological role, catalyzes the acetylation of beta-lysine to N6-acetyl-beta-lysine, a compatible solute produced by methanogenic archaea that helps cells to cope with salt stress. This Methanosarcina mazei (strain ATCC BAA-159 / DSM 3647 / Goe1 / Go1 / JCM 11833 / OCM 88) (Methanosarcina frisia) protein is Beta-lysine N(6)-acetyltransferase.